Consider the following 132-residue polypeptide: Vacuolar protein sorting-associated protein 55 homolog (132 aa).

4 helical membrane passes run 7 to 27 (VAALAFAGVVGLTFLVLGCAL), 32 to 52 (TWTPMFVITFYVLSPVPLLIA), 68 to 88 (LALFITTGIVISAFALPIVLA), and 98 to 118 (CFLVNTGSVIMFGTIIAYFYL).

Belongs to the OB-RGRP/VPS55 family.

It localises to the endosome membrane. In terms of biological role, involved in endosomal protein transport. In Caenorhabditis elegans, this protein is Vacuolar protein sorting-associated protein 55 homolog.